A 153-amino-acid chain; its full sequence is Transcriptional repressor NrdR 3 (153 aa).

The interval 1 to 26 (MRCPFCGHDDTQVKDSRPTEDNSAIR) is disordered. Residues 3–34 (CPFCGHDDTQVKDSRPTEDNSAIRRRRSCPEC) fold into a zinc finger. Residues 7-24 (GHDDTQVKDSRPTEDNSA) are compositionally biased toward basic and acidic residues. The ATP-cone domain occupies 49 to 139 (LVVIKKDGGR…VYRNFREAKD (91 aa)).

It belongs to the NrdR family. Zn(2+) serves as cofactor.

In terms of biological role, negatively regulates transcription of bacterial ribonucleotide reductase nrd genes and operons by binding to NrdR-boxes. The chain is Transcriptional repressor NrdR 3 from Paramagnetospirillum magneticum (strain ATCC 700264 / AMB-1) (Magnetospirillum magneticum).